Reading from the N-terminus, the 317-residue chain is MATTRMVRVSQDGSGDYCSVQDAIDSVPLGNTCRTVIRLSPGIYRQPVYVPKRKNFITFAGISPEITVLTWNNTASKIEHHQASRVIGTGTFGCGSVIVEGEDFIAENITFENSAPEGSGQAVAIRVTADRCAFYNCRFLGWQDTLYLHHGKQYLKDCYIEGSVDFIFGNSTALLEHCHIHCKSQGFITAQSRKSSQESTGYVFLRCVITGNGQSGYMYLGRPWGPFGRVVLAYTYMDACIRNVGWHNWGNAENERSACFYEYRCFGPGSCSSERVPWSRELMDDEAGHFVHHSFVDPEQDRPWLCLRMGVKTPYSA.

2 residues coordinate substrate: Thr-91 and Gln-121. Asp-144 serves as the catalytic Proton donor. Asp-165 functions as the Nucleophile in the catalytic mechanism. Substrate-binding residues include Arg-222 and Trp-224.

Belongs to the pectinesterase family. As to expression, expressed in siliques.

It catalyses the reaction [(1-&gt;4)-alpha-D-galacturonosyl methyl ester](n) + n H2O = [(1-&gt;4)-alpha-D-galacturonosyl](n) + n methanol + n H(+). Its pathway is glycan metabolism; pectin degradation; 2-dehydro-3-deoxy-D-gluconate from pectin: step 1/5. Does not require salt for activity. Not inhibited by kiwi pectin methylesterase inhibitor (PMEI). In terms of biological role, acts in the modification of cell walls via demethylesterification of cell wall pectin. Acts in a blockwise manner, resulting in a cell wall rigidification. The chain is Pectinesterase 31 (PME31) from Arabidopsis thaliana (Mouse-ear cress).